A 258-amino-acid chain; its full sequence is NAD kinase (258 aa).

Aspartate 45 serves as the catalytic Proton acceptor. NAD(+) is bound by residues 45–46, 117–118, aspartate 147, alanine 155, 158–163, and alanine 182; these read DG, NE, and TAYNYS.

This sequence belongs to the NAD kinase family. Requires a divalent metal cation as cofactor.

Its subcellular location is the cytoplasm. The catalysed reaction is NAD(+) + ATP = ADP + NADP(+) + H(+). Involved in the regulation of the intracellular balance of NAD and NADP, and is a key enzyme in the biosynthesis of NADP. Catalyzes specifically the phosphorylation on 2'-hydroxyl of the adenosine moiety of NAD to yield NADP. The chain is NAD kinase from Xanthomonas oryzae pv. oryzae (strain MAFF 311018).